The sequence spans 316 residues: tRNA dimethylallyltransferase (316 aa).

ATP is bound at residue 14-21 (GPTAVGKT). Residue 16-21 (TAVGKT) participates in substrate binding. The tract at residues 39-42 (DSMQ) is interaction with substrate tRNA.

Belongs to the IPP transferase family. As to quaternary structure, monomer. It depends on Mg(2+) as a cofactor.

It catalyses the reaction adenosine(37) in tRNA + dimethylallyl diphosphate = N(6)-dimethylallyladenosine(37) in tRNA + diphosphate. Catalyzes the transfer of a dimethylallyl group onto the adenine at position 37 in tRNAs that read codons beginning with uridine, leading to the formation of N6-(dimethylallyl)adenosine (i(6)A). This Bacillus cytotoxicus (strain DSM 22905 / CIP 110041 / 391-98 / NVH 391-98) protein is tRNA dimethylallyltransferase.